Here is a 300-residue protein sequence, read N- to C-terminus: Cathepsin B-like CP2 (300 aa).

The first 19 residues, 1-19 (MKLFLLAAAAFSAPALTVS), serve as a signal peptide directing secretion. 3 cysteine pairs are disulfide-bonded: Cys-88–Cys-115, Cys-98–Cys-141, and Cys-134–Cys-177. Cys-101 is an active-site residue. Residues His-245 and Asn-266 contribute to the active site.

The protein belongs to the peptidase C1 family.

The protein localises to the vacuole. Functionally, thiol protease which is required for parasite excystation and invasion of the proximal small intestine of the human host. The protein is Cathepsin B-like CP2 (CP2) of Giardia intestinalis (Giardia lamblia).